Here is a 247-residue protein sequence, read N- to C-terminus: Pulmonary surfactant-associated protein A (247 aa).

Positions 1–15 (MLLLSLALTLISAPA) are cleaved as a signal peptide. Residues 27-99 (GSPGIPGTPG…PGERGPPGLP (73 aa)) enclose the Collagen-like domain. Residues P29, P32, P35, P41, P53, P56, P62, P66, and P69 each carry the 4-hydroxyproline modification. Residues 30–100 (GIPGTPGSHG…GERGPPGLPA (71 aa)) are disordered. Positions 41-50 (PGRDGRDGVK) are enriched in basic and acidic residues. Residues 53-64 (PGPPGPMGPPGG) show a composition bias toward pro residues. Residues 83–92 (ERGDKGEPGE) are compositionally biased toward basic and acidic residues. In terms of domain architecture, C-type lectin spans 132-247 (AVGEKIFSTN…LQYRLVICEF (116 aa)). Disulfide bonds link C154/C245 and C223/C237. Residue N206 is glycosylated (N-linked (GlcNAc...) asparagine). The Ca(2+) site is built by E214, R216, N233, and D234.

The protein belongs to the SFTPA family. As to quaternary structure, oligomeric complex of 6 set of homotrimers.

The protein resides in the secreted. It localises to the extracellular space. The protein localises to the extracellular matrix. It is found in the surface film. In presence of calcium ions, it binds to surfactant phospholipids and contributes to lower the surface tension at the air-liquid interface in the alveoli of the mammalian lung and is essential for normal respiration. Enhances the expression of MYO18A/SP-R210 on alveolar macrophages. This chain is Pulmonary surfactant-associated protein A (SFTPA1), found in Oryctolagus cuniculus (Rabbit).